The chain runs to 149 residues: Glutamyl-tRNA(Gln) amidotransferase subunit C, mitochondrial (149 aa).

Belongs to the GatC family. As to quaternary structure, subunit of the heterotrimeric GatCAB amidotransferase (AdT) complex, composed of A, B and C subunits.

Its subcellular location is the mitochondrion. The enzyme catalyses L-glutamyl-tRNA(Gln) + L-glutamine + ATP + H2O = L-glutaminyl-tRNA(Gln) + L-glutamate + ADP + phosphate + H(+). Its function is as follows. Allows the formation of correctly charged Gln-tRNA(Gln) through the transamidation of misacylated Glu-tRNA(Gln) in the mitochondria. The reaction takes place in the presence of glutamine and ATP through an activated gamma-phospho-Glu-tRNA(Gln). The sequence is that of Glutamyl-tRNA(Gln) amidotransferase subunit C, mitochondrial from Trichoplax adhaerens (Trichoplax reptans).